A 1088-amino-acid polypeptide reads, in one-letter code: Tyrocidine synthase 1 (1088 aa).

The region spanning 528–602 (PPRTETESIL…QVALFVKSTT (75 aa)) is the Carrier domain. O-(pantetheine 4'-phosphoryl)serine is present on Ser-563.

Belongs to the ATP-dependent AMP-binding enzyme family. In terms of assembly, large multienzyme complex of TycA, TycB and TycC. It depends on pantetheine 4'-phosphate as a cofactor.

The enzyme catalyses L-phenylalanine + ATP + H2O = D-phenylalanine + AMP + diphosphate + H(+). Its pathway is antibiotic biosynthesis; tyrocidine biosynthesis. In the first step of peptide synthesis this enzyme activates phenylalanine and racemizes it to the D-isomer. The protein is Tyrocidine synthase 1 (tycA) of Brevibacillus parabrevis.